The sequence spans 247 residues: PF03932 family protein CutC (247 aa).

Positions 205-222 (KSTRPSLMESNSSAQMGS) are enriched in polar residues. Residues 205-226 (KSTRPSLMESNSSAQMGSNDVD) are disordered.

The protein belongs to the CutC family.

The protein resides in the cytoplasm. This chain is PF03932 family protein CutC, found in Vibrio atlanticus (strain LGP32) (Vibrio splendidus (strain Mel32)).